The primary structure comprises 120 residues: Large ribosomal subunit protein uL18 (120 aa).

It belongs to the universal ribosomal protein uL18 family. As to quaternary structure, part of the 50S ribosomal subunit; part of the 5S rRNA/L5/L18/L25 subcomplex. Contacts the 5S and 23S rRNAs.

Functionally, this is one of the proteins that bind and probably mediate the attachment of the 5S RNA into the large ribosomal subunit, where it forms part of the central protuberance. This is Large ribosomal subunit protein uL18 from Acidiphilium cryptum (strain JF-5).